Reading from the N-terminus, the 553-residue chain is MSQAIEIKVPDIGDYDAVPVIEVHVKPGDSINAEDALVTLESDKATMDVPSPQAGVVKDVRIKVGDNVSEGSVLVMLEAANEPAAAPAPAAAAPAPAAAAPAPAPAPAAAPAAAPAAGGGGTIEVKVPDIGDYDAVPVIEVHVKAGDTINAEDAVVTLESDKATMDVPSPQGGVVKEVKVKVGDNVAEGTLLLILEGAAASAAPAAAAAAPAPAASAPAPAPAPAAAAPAPAAAPAAAPAAAGVTGKAAHASPSVRKFARELGVDVSRVPGTGPKGRITQEDVQGYVKGVMSGQAAAPAQAAAAGAGGGELGLLPWPKFDFTRFGEVESKALSRIKKISGANLHRNWVMIPHVTNHDEADITELEAFRLQLNKENEKSGIKVTMLAFMIKATVAALKKFPNFNASLDGDNLVLKKYFNIGFAADTPNGLVVPVIKDADKKGVLEISQEMSELAKLARDGKLKPDQMQGGCFSISSLGGLGGTYFTPIINAPEVAIMGVCKSYQKPVWDGKQFAPRLTLPLSLSWDHRVIDGAEAARFNTYFGQLLADFRRILL.

Positions 4-78 constitute a Lipoyl-binding 1 domain; the sequence is AIEIKVPDIG…SEGSVLVMLE (75 aa). Lys-44 carries the N6-lipoyllysine modification. The disordered stretch occupies residues 97-118; sequence AAAAPAPAPAPAAAPAAAPAAG. In terms of domain architecture, Lipoyl-binding 2 spans 122–196; the sequence is TIEVKVPDIG…AEGTLLLILE (75 aa). An N6-lipoyllysine modification is found at Lys-162. Residues 250–287 form the Peripheral subunit-binding (PSBD) domain; it reads HASPSVRKFARELGVDVSRVPGTGPKGRITQEDVQGYV. His-526 is an active-site residue.

It belongs to the 2-oxoacid dehydrogenase family. In terms of assembly, forms a 24-polypeptide structural core with octahedral symmetry. Requires (R)-lipoate as cofactor.

The enzyme catalyses N(6)-[(R)-dihydrolipoyl]-L-lysyl-[protein] + acetyl-CoA = N(6)-[(R)-S(8)-acetyldihydrolipoyl]-L-lysyl-[protein] + CoA. In terms of biological role, the pyruvate dehydrogenase complex catalyzes the overall conversion of pyruvate to acetyl-CoA and CO(2). It contains multiple copies of three enzymatic components: pyruvate dehydrogenase (E1), dihydrolipoamide acetyltransferase (E2) and lipoamide dehydrogenase (E3). The protein is Dihydrolipoyllysine-residue acetyltransferase component of pyruvate dehydrogenase complex (pdhB) of Cupriavidus necator (strain ATCC 17699 / DSM 428 / KCTC 22496 / NCIMB 10442 / H16 / Stanier 337) (Ralstonia eutropha).